The primary structure comprises 951 residues: Cadmium/zinc-transporting ATPase HMA2 (951 aa).

The Cytoplasmic portion of the chain corresponds to 1-83; it reads MASKKMTKSY…VRVTGETNFK (83 aa). One can recognise an HMA domain in the interval 7-73; the sequence is TKSYFDVLGI…ALNQAQLEAN (67 aa). A helical membrane pass occupies residues 84–105; sequence NKWPSPFAVVSGILLLLSFFKY. Residues 106–108 are Extracellular-facing; the sequence is LYS. The chain crosses the membrane as a helical span at residues 109-128; the sequence is PFRWLAVAAVVAGIYPILAK. Residues 129–135 lie on the Cytoplasmic side of the membrane; that stretch reads AVASLAR. The chain crosses the membrane as a helical span at residues 136–156; it reads FRIDINILVVVTVGATIGMQD. Y157 is a topological domain (extracellular). Residues 158–178 form a helical membrane-spanning segment; it reads TEAAVVVFLFTIAEWLQSRAS. Residues 179–304 lie on the Cytoplasmic side of the membrane; that stretch reads YKASAVMQSL…KTETQRFIDK (126 aa). A helical transmembrane segment spans residues 305 to 327; the sequence is CSKYYTPAIILISICFVAIPFAL. At 328–335 the chain is on the extracellular side; the sequence is KVHNLKHW. A helical membrane pass occupies residues 336 to 353; that stretch reads VHLALVVLVSACPCGLIL. Over 354–647 the chain is Cytoplasmic; the sequence is STPVATFCAL…KLAKRAKRKV (294 aa). D391 (4-aspartylphosphate intermediate) is an active-site residue. Residues D592 and D596 each contribute to the Mg(2+) site. A helical transmembrane segment spans residues 648–667; sequence VENVVISITMKGAILALAFA. Residues 668-671 lie on the Extracellular side of the membrane; it reads GHPL. The chain crosses the membrane as a helical span at residues 672 to 691; the sequence is IWAAVLADVGTCLLVILNSM. Residues 692-951 are Cytoplasmic-facing; the sequence is LLLSDKHKTG…VGTLKEIVIE (260 aa). Over residues 841-851 the composition is skewed to basic and acidic residues; the sequence is ELQQSCHDKPS. A disordered region spans residues 841-866; sequence ELQQSCHDKPSGLDIGTGPKHEGSST.

Belongs to the cation transport ATPase (P-type) (TC 3.A.3) family. Type IB subfamily. As to expression, predominantly expressed in the vascular tissues of roots, stems, and leaves. Also detected in developing anthers.

It localises to the cell membrane. The enzyme catalyses Zn(2+)(in) + ATP + H2O = Zn(2+)(out) + ADP + phosphate + H(+). It catalyses the reaction Cd(2+)(in) + ATP + H2O = Cd(2+)(out) + ADP + phosphate + H(+). In terms of biological role, plays an important role in zinc transport and homeostasis. Could also be involved in cadmium detoxification. The chain is Cadmium/zinc-transporting ATPase HMA2 (HMA2) from Arabidopsis thaliana (Mouse-ear cress).